A 129-amino-acid polypeptide reads, in one-letter code: Large ribosomal subunit protein bL17 (129 aa).

This sequence belongs to the bacterial ribosomal protein bL17 family. As to quaternary structure, part of the 50S ribosomal subunit. Contacts protein L32.

This Serratia proteamaculans (strain 568) protein is Large ribosomal subunit protein bL17.